The chain runs to 534 residues: CTP synthase (534 aa).

Residues 1–268 (MAAKYIFVTG…DQIVCDHLQL (268 aa)) form an amidoligase domain region. S14 provides a ligand contact to CTP. S14 contributes to the UTP binding site. 15–20 (SLGKGI) is a binding site for ATP. Y55 provides a ligand contact to L-glutamine. Residue D72 coordinates ATP. The Mg(2+) site is built by D72 and E142. Residues 149–151 (DIE), 189–194 (KSKPTQ), and K225 contribute to the CTP site. UTP contacts are provided by residues 189–194 (KSKPTQ) and K225. The region spanning 293–534 (RIAIVGKYVE…FVRNALAAQA (242 aa)) is the Glutamine amidotransferase type-1 domain. G355 serves as a coordination point for L-glutamine. The active-site Nucleophile; for glutamine hydrolysis is C382. L-glutamine-binding positions include 383–386 (LGMQ), E406, and R463. Residues H508 and E510 contribute to the active site.

Belongs to the CTP synthase family. Homotetramer.

The enzyme catalyses UTP + L-glutamine + ATP + H2O = CTP + L-glutamate + ADP + phosphate + 2 H(+). It catalyses the reaction L-glutamine + H2O = L-glutamate + NH4(+). It carries out the reaction UTP + NH4(+) + ATP = CTP + ADP + phosphate + 2 H(+). Its pathway is pyrimidine metabolism; CTP biosynthesis via de novo pathway; CTP from UDP: step 2/2. Allosterically activated by GTP, when glutamine is the substrate; GTP has no effect on the reaction when ammonia is the substrate. The allosteric effector GTP functions by stabilizing the protein conformation that binds the tetrahedral intermediate(s) formed during glutamine hydrolysis. Inhibited by the product CTP, via allosteric rather than competitive inhibition. In terms of biological role, catalyzes the ATP-dependent amination of UTP to CTP with either L-glutamine or ammonia as the source of nitrogen. Regulates intracellular CTP levels through interactions with the four ribonucleotide triphosphates. The protein is CTP synthase of Shouchella clausii (strain KSM-K16) (Alkalihalobacillus clausii).